A 98-amino-acid chain; its full sequence is MTLIHFSFCSAFILGLTGLALNRSPILSILLCLEGMLLMSMDGIVLTPLHLTIYLSSMMLYIMLPFAAPEAATGLSLNSDHYTTHGTDKLFSLNLLEC.

Transmembrane regions (helical) follow at residues 1–21 (MTLI…GLAL) and 48–68 (PLHL…PFAA).

This sequence belongs to the complex I subunit 4L family. As to quaternary structure, core subunit of respiratory chain NADH dehydrogenase (Complex I) which is composed of 45 different subunits.

It is found in the mitochondrion inner membrane. The enzyme catalyses a ubiquinone + NADH + 5 H(+)(in) = a ubiquinol + NAD(+) + 4 H(+)(out). Functionally, core subunit of the mitochondrial membrane respiratory chain NADH dehydrogenase (Complex I) which catalyzes electron transfer from NADH through the respiratory chain, using ubiquinone as an electron acceptor. Part of the enzyme membrane arm which is embedded in the lipid bilayer and involved in proton translocation. The protein is NADH-ubiquinone oxidoreductase chain 4L (mt-nd4l) of Xenopus laevis (African clawed frog).